The chain runs to 298 residues: MAAAAAAVAGAGRGGGGGGGGGGAADPGQERSRARSWVGAERSEGRRMEPNEELEEEDSPGGREDGFTAEHLAAEAMAADMDPWLVFDARTTPATELDAWLAKYPPSQVTRYGDPGSPNSEPVGWIAAYGQGYTPNSGDVQGLQAAWEALQTSGRPITPGTLRQLAITHHVLSGKWLIHLSPGFKLDHAWAGIARAVVEGRLQVAKVSPRAKEGGRQVICVYTDDFTDRLGVLEADSAIRAAGIKCLLTYKPDVYTYLGIYRANRWHLCPTLYESRFQLGGNTRGSRVLDRANNVELT.

Positions 1–10 are enriched in low complexity; that stretch reads MAAAAAAVAG. Positions 1–66 are disordered; that stretch reads MAAAAAAVAG…EDSPGGREDG (66 aa). Positions 11–25 are enriched in gly residues; sequence AGRGGGGGGGGGGAA. Residues 41–50 are compositionally biased toward basic and acidic residues; the sequence is ERSEGRRMEP.

This sequence belongs to the UPF0696 family.

The chain is UPF0696 protein C11orf68 homolog (Bles03) from Mus musculus (Mouse).